Consider the following 553-residue polypeptide: MFCFQCQETAKNTGCTVKGMCGKPEETANLQDLLIFVLRGIAIYGEKLKELGQPDRSNDDFVLQGLFATITNANWDDARFEAMISEGLARRDKLRNAFLAVYKAKNGKDFSEPLPEAATWTGDSTAFAEKAKSVGILATENEDVRSLRELLIIGLKGVAAYAEHAAVLGFRKTEIDEFMLEALASTTKDLSVDEMVALVMKAGGMAVTTMALLDEANTTTYGNPEITQVNIGVGKNPGILISGHDLKDMAELLKQTEGTGVDVYTHGEMLPANYYPAFKKYPHFVGNYGGSWWQQNPEFESFNGPILLTTNCLVPLKKENTYLDRLYTTGVVGYEGAKHIADRPAGGAKDFSALIAQAKKCPPPVEIETGSIVGGFAHHQVLALADKVVEAVKSGAIKRFVVMAGCDGRQKSRSYYTEVAENLPKDTVILTAGCAKYRYNKLNLGDIGGIPRVLDAGQCNDSYSLAVIALKLKEVFGLDDINDLPVSYDIAWYEQKAVAVLLALLFLGVKGIRLGPTLPAFLSPNVAKVLVENFNIKPIGTVQDDIAAMMAGK.

[4Fe-4S] cluster-binding residues include Cys-3, Cys-6, Cys-15, and Cys-21. Hybrid [4Fe-2O-2S] cluster-binding residues include His-244, Glu-268, Cys-312, Cys-406, Cys-434, Cys-459, Glu-494, and Lys-496. Cys-406 is subject to Cysteine persulfide.

This sequence belongs to the HCP family. In terms of assembly, monomer. [4Fe-4S] cluster serves as cofactor. The cofactor is hybrid [4Fe-2O-2S] cluster.

It localises to the cytoplasm. It catalyses the reaction A + NH4(+) + H2O = hydroxylamine + AH2 + H(+). Its function is as follows. Catalyzes the reduction of hydroxylamine to form NH(3) and H(2)O. The polypeptide is Hydroxylamine reductase (Nitratidesulfovibrio vulgaris (strain ATCC 29579 / DSM 644 / CCUG 34227 / NCIMB 8303 / VKM B-1760 / Hildenborough) (Desulfovibrio vulgaris)).